Here is a 462-residue protein sequence, read N- to C-terminus: Argininosuccinate lyase (462 aa).

The protein belongs to the lyase 1 family. Argininosuccinate lyase subfamily.

The protein localises to the cytoplasm. The enzyme catalyses 2-(N(omega)-L-arginino)succinate = fumarate + L-arginine. The protein operates within amino-acid biosynthesis; L-arginine biosynthesis; L-arginine from L-ornithine and carbamoyl phosphate: step 3/3. This Pelagibacter ubique (strain HTCC1062) protein is Argininosuccinate lyase.